A 326-amino-acid chain; its full sequence is tRNA-dihydrouridine(20/20a) synthase (326 aa).

FMN-binding positions include 11-13 (PML) and Gln-63. The active-site Proton donor is Cys-93. FMN is bound by residues Lys-132, His-165, 205-207 (NGG), and 227-228 (GR).

It belongs to the Dus family. DusA subfamily. FMN serves as cofactor.

It carries out the reaction 5,6-dihydrouridine(20) in tRNA + NADP(+) = uridine(20) in tRNA + NADPH + H(+). The catalysed reaction is 5,6-dihydrouridine(20) in tRNA + NAD(+) = uridine(20) in tRNA + NADH + H(+). The enzyme catalyses 5,6-dihydrouridine(20a) in tRNA + NADP(+) = uridine(20a) in tRNA + NADPH + H(+). It catalyses the reaction 5,6-dihydrouridine(20a) in tRNA + NAD(+) = uridine(20a) in tRNA + NADH + H(+). Catalyzes the synthesis of 5,6-dihydrouridine (D), a modified base found in the D-loop of most tRNAs, via the reduction of the C5-C6 double bond in target uridines. Specifically modifies U20 and U20a in tRNAs. This is tRNA-dihydrouridine(20/20a) synthase from Vibrio vulnificus (strain CMCP6).